Here is a 131-residue protein sequence, read N- to C-terminus: Fumarate reductase subunit C (131 aa).

3 consecutive transmembrane segments (helical) span residues 30 to 50 (EGTAVPTVWFSIELIFGLFAL), 57 to 77 (WMGFVGFLQNPVVVILNLITL), and 109 to 129 (IIKGLWVVTAVVTVVILYVAL).

The protein belongs to the FrdC family. In terms of assembly, part of an enzyme complex containing four subunits: a flavoprotein (FrdA), an iron-sulfur protein (FrdB), and two hydrophobic anchor proteins (FrdC and FrdD).

The protein localises to the cell inner membrane. In terms of biological role, two distinct, membrane-bound, FAD-containing enzymes are responsible for the catalysis of fumarate and succinate interconversion; fumarate reductase is used in anaerobic growth, and succinate dehydrogenase is used in aerobic growth. Anchors the catalytic components of the fumarate reductase complex to the cell inner membrane, binds quinones. The chain is Fumarate reductase subunit C from Salmonella dublin (strain CT_02021853).